Consider the following 338-residue polypeptide: Beta-ketoacyl-[acyl-carrier-protein] synthase III (338 aa).

Catalysis depends on residues cysteine 119 and histidine 261. The tract at residues 262–266 (QANQR) is ACP-binding. Residue asparagine 291 is part of the active site.

Belongs to the thiolase-like superfamily. FabH family. Homodimer.

The protein resides in the cytoplasm. The enzyme catalyses malonyl-[ACP] + acetyl-CoA + H(+) = 3-oxobutanoyl-[ACP] + CO2 + CoA. Its pathway is lipid metabolism; fatty acid biosynthesis. Catalyzes the condensation reaction of fatty acid synthesis by the addition to an acyl acceptor of two carbons from malonyl-ACP. Catalyzes the first condensation reaction which initiates fatty acid synthesis and may therefore play a role in governing the total rate of fatty acid production. Possesses both acetoacetyl-ACP synthase and acetyl transacylase activities. Its substrate specificity determines the biosynthesis of branched-chain and/or straight-chain of fatty acids. This Prochlorococcus marinus (strain SARG / CCMP1375 / SS120) protein is Beta-ketoacyl-[acyl-carrier-protein] synthase III.